The primary structure comprises 459 residues: Phosphomethylpyrimidine synthase (459 aa).

Residues N80, M109, Y139, H175, 195–197, 236–239, and E275 contribute to the substrate site; these read SRG and DSLR. H279 serves as a coordination point for Zn(2+). Y302 provides a ligand contact to substrate. Zn(2+) is bound at residue H343. [4Fe-4S] cluster contacts are provided by C423, C426, and C431.

The protein belongs to the ThiC family. [4Fe-4S] cluster is required as a cofactor.

It carries out the reaction 5-amino-1-(5-phospho-beta-D-ribosyl)imidazole + S-adenosyl-L-methionine = 4-amino-2-methyl-5-(phosphooxymethyl)pyrimidine + CO + 5'-deoxyadenosine + formate + L-methionine + 3 H(+). It participates in cofactor biosynthesis; thiamine diphosphate biosynthesis. Functionally, catalyzes the synthesis of the hydroxymethylpyrimidine phosphate (HMP-P) moiety of thiamine from aminoimidazole ribotide (AIR) in a radical S-adenosyl-L-methionine (SAM)-dependent reaction. This is Phosphomethylpyrimidine synthase from Prochlorococcus marinus (strain MIT 9303).